The sequence spans 892 residues: Microsomal triglyceride transfer protein homolog (892 aa).

The first 19 residues, Met-1 to Ala-19, serve as a signal peptide directing secretion.

In terms of assembly, heterodimer; heterodimerizes with protein disulfide isomerase.

Its subcellular location is the endoplasmic reticulum. Its function is as follows. Catalyzes the transport of cholesteryl ester, and phospholipid between phospholipid surfaces. Does not catalyze transport of triglycerides. Required for the assembly and secretion of plasma lipoproteins that contain apolipoprotein B. Required for normal expression of klf-3. The chain is Microsomal triglyceride transfer protein homolog from Caenorhabditis elegans.